The following is a 127-amino-acid chain: Dual endothelin-1/VEGF signal peptide receptor (127 aa).

The Extracellular portion of the chain corresponds to 1–69; sequence MSTFYVTAVP…EMKSRWNWGS (69 aa). Residues 70 to 88 traverse the membrane as a helical segment; it reads ITCIMCFTCVGSQLSMSSS. At 89–127 the chain is on the cytoplasmic side; it reads KASNFSGPLQLYQRGIGHITNPYRRPPAPAWPCSSSGTT.

As to expression, prominently expressed in brain and heart tissues. Weakly expressed in aorta, adrenal gland, and lung tissues.

The protein resides in the cell membrane. Its function is as follows. In the Dahl salt-resistant strain, acts as a dual receptor for both endothelin-1 and the signal sequence of vascular endothelial growth factor A and does not act as a receptor for angiotensin-2. Does not bind the VEGFA mature protein. In the Dahl salt-sensitive strain, acts as a dual endothelin-1/angiotensin-2 receptor that is functionally coupled to a calcium-mobilizing transduction system, responding equivalently to both endothelin-1/EDN1 and angiotensin-2 peptides in a highly specific manner. May play a role in angiogenesis with a significant role in cardiovascular and neural development. The chain is Dual endothelin-1/VEGF signal peptide receptor from Rattus norvegicus (Rat).